Here is a 355-residue protein sequence, read N- to C-terminus: Replication-associated protein (355 aa).

The CRESS-DNA virus Rep endonuclease domain occupies 11 to 114 (SHRNANTFLT…PLAVFERGTF (104 aa)). Positions 18–21 (FLTY) match the RCR-1 motif. A divalent metal cation contacts are provided by E52, H60, and H62. The RCR-2 signature appears at 60-62 (HLH). The active-site For DNA cleavage activity is Y100. The RCR-3 signature appears at 100–103 (YILK). Residue E104 coordinates a divalent metal cation. Positions 175–187 (SANKLFPEIQEEF) are oligomerization. 229–236 (GPTRTGKS) contributes to the ATP binding site. A transactivation region spans residues 252–270 (VDWSSYNEDAIYNIVDDIP). The Nuclear localization signal signature appears at 292–303 (KYGKKKKVQKKS).

It belongs to the geminiviridae Rep protein family. In terms of assembly, homooligomer. Rep binds to repeated DNA motifs (iterons). Forms the O-complex, which is a Rep-DNA complex involved in the initiation of RCR. Part of the C- and V-complexes which are RepA-Rep-DNA complexes involved in the c-sense and v-sense transcription. Requires Mg(2+) as cofactor. It depends on Mn(2+) as a cofactor.

The protein resides in the host nucleus. Essential for the replication of viral ssDNA. The closed circular ssDNA genome is first converted to a superhelical dsDNA. Rep binds a specific region at the genome origin of replication. It introduces an endonucleolytic nick within the conserved sequence 5'-TAATATTAC-3' in the intergenic region of the genome present in all geminiviruses, thereby initiating the rolling circle replication (RCR). Following cleavage, binds covalently to the 5'-phosphate of DNA as a tyrosyl ester. The cleavage gives rise to a free 3'-OH that serves as a primer for the cellular DNA polymerase. The polymerase synthesizes the (+) strand DNA by rolling circle mechanism. After one round of replication, a Rep-catalyzed nucleotidyl transfer reaction releases a circular single-stranded virus genome, thereby terminating the replication. Displays origin-specific DNA cleavage, nucleotidyl transferase, ATPase and helicase activities. Acts as an inhibitor of C-sense gene transcription. In Maize streak virus genotype A (isolate South Africa) (MSV), this protein is Replication-associated protein.